Consider the following 471-residue polypeptide: Phosphatidylinositol 4-kinase type 2-alpha (471 aa).

2 disordered regions span residues 1-25 (MDETSPLVSPDRDQTDYSYQSQCSP) and 48-101 (PGSA…PDDP). Over residues 90 to 101 (AERERNKFPDDP) the composition is skewed to basic and acidic residues. A PI3K/PI4K catalytic domain is found at 117-445 (DILPERISQG…VQTPPVIVET (329 aa)). The tract at residues 123–129 (ISQGSSG) is G-loop. Residues 124–130 (SQGSSGS) and Lys145 contribute to the ATP site. The interval 150–152 (EPY) is important for substrate binding. The segment at 158–171 (KWTKWLQKLCCPCC) is important for interaction with membranes. S-palmitoyl cysteine attachment occurs at residues Cys167, Cys168, Cys170, and Cys171. 254–257 (QLFV) contributes to the ATP binding site. The tract at residues 261–269 (KDADYWLRR) is important for interaction with membranes. The interval 298 to 306 (RNTDRGNDN) is catalytic loop. The tract at residues 336 to 356 (AIDNGLAFPLKHPDSWRAYPF) is activation loop. Asp338 lines the ATP pocket. The important for interaction with membranes stretch occupies residues 351–360 (WRAYPFYWAW).

It belongs to the PI3/PI4-kinase family. Type II PI4K subfamily.

The protein resides in the golgi apparatus. It localises to the trans-Golgi network membrane. It is found in the membrane raft. The protein localises to the endosome. Its subcellular location is the endosome membrane. The protein resides in the cytoplasmic vesicle. It localises to the cell projection. It is found in the dendrite. The protein localises to the presynaptic cell membrane. Its subcellular location is the synapse. The protein resides in the synaptosome. It localises to the mitochondrion. It is found in the membrane. The protein localises to the cell membrane. Its subcellular location is the perikaryon. The protein resides in the neuron projection. It catalyses the reaction a 1,2-diacyl-sn-glycero-3-phospho-(1D-myo-inositol) + ATP = a 1,2-diacyl-sn-glycero-3-phospho-(1D-myo-inositol 4-phosphate) + ADP + H(+). Its function is as follows. Membrane-bound phosphatidylinositol-4 kinase (PI4-kinase) that catalyzes the phosphorylation of phosphatidylinositol (PI) to phosphatidylinositol 4-phosphate (PI4P), a lipid that plays important roles in endocytosis, Golgi function, protein sorting and membrane trafficking. Besides, phosphorylation of phosphatidylinositol (PI) to phosphatidylinositol 4-phosphate (PI4P) is the first committed step in the generation of phosphatidylinositol 4,5-bisphosphate (PIP2), a precursor of the second messenger inositol 1,4,5-trisphosphate (InsP3). This chain is Phosphatidylinositol 4-kinase type 2-alpha (pi4k2a), found in Xenopus tropicalis (Western clawed frog).